Reading from the N-terminus, the 53-residue chain is ATP synthase protein 8 (53 aa).

The helical transmembrane segment at 9–29 (WIFFLFFFICIFLIFNIMNYF) threads the bilayer.

The protein belongs to the ATPase protein 8 family. In terms of assembly, F-type ATPases have 2 components, CF(1) - the catalytic core - and CF(0) - the membrane proton channel.

Its subcellular location is the mitochondrion membrane. Mitochondrial membrane ATP synthase (F(1)F(0) ATP synthase or Complex V) produces ATP from ADP in the presence of a proton gradient across the membrane which is generated by electron transport complexes of the respiratory chain. F-type ATPases consist of two structural domains, F(1) - containing the extramembraneous catalytic core and F(0) - containing the membrane proton channel, linked together by a central stalk and a peripheral stalk. During catalysis, ATP synthesis in the catalytic domain of F(1) is coupled via a rotary mechanism of the central stalk subunits to proton translocation. Part of the complex F(0) domain. Minor subunit located with subunit a in the membrane. This Bombyx mori (Silk moth) protein is ATP synthase protein 8 (mt:ATPase8).